Here is a 665-residue protein sequence, read N- to C-terminus: RNA-directed RNA polymerase (665 aa).

A RdRp catalytic domain is found at asparagine 310–proline 485. Mg(2+) is bound by residues aspartate 454, tyrosine 491, and glycine 495.

As to quaternary structure, part of the packaging complex composed of RDRP, P4 and P7. Interacts with P7. Requires Mg(2+) as cofactor. It depends on Mn(2+) as a cofactor.

Its subcellular location is the virion. It carries out the reaction RNA(n) + a ribonucleoside 5'-triphosphate = RNA(n+1) + diphosphate. Functionally, rna-dependent RNA polymerase part of the packaging complex that packages the viral RNA segments, replicate them into a double-stranded form and transcribe them. This is RNA-directed RNA polymerase (P2) from Pseudomonas phage phi6 (Bacteriophage phi-6).